We begin with the raw amino-acid sequence, 202 residues long: 3-isopropylmalate dehydratase small subunit (202 aa).

It belongs to the LeuD family. LeuD type 1 subfamily. Heterodimer of LeuC and LeuD.

It catalyses the reaction (2R,3S)-3-isopropylmalate = (2S)-2-isopropylmalate. It participates in amino-acid biosynthesis; L-leucine biosynthesis; L-leucine from 3-methyl-2-oxobutanoate: step 2/4. Functionally, catalyzes the isomerization between 2-isopropylmalate and 3-isopropylmalate, via the formation of 2-isopropylmaleate. The polypeptide is 3-isopropylmalate dehydratase small subunit (Blochmanniella pennsylvanica (strain BPEN)).